Reading from the N-terminus, the 317-residue chain is Transcription factor EC (317 aa).

The necessary for transcriptional transactivation stretch occupies residues methionine 1–isoleucine 90. The bHLH domain occupies glutamine 110 to leucine 163. The tract at residues threonine 242–leucine 317 is necessary for transcriptional transactivation.

The protein belongs to the MiT/TFE family. In terms of assembly, homodimer. Forms heterodimers with MITF. Interacts with MITF. Forms heterodimers with TFE3. Expressed in osteoclast-like cells (at protein level). Expressed in cells of the mononuclear phagocyte lineage. Expressed in macrophages and in osteoclast-like cells.

The protein resides in the nucleus. Functionally, transcriptional regulator that acts as a repressor or an activator. Acts as a transcriptional transactivator on the proximal promoter region of the tartrate-resistant acid phosphatase (TRAP) E-box containing promoter. Collaborates with MITF in target gene activation. Acts as a transcriptional repressor on minimal promoter containing element F (that includes an E-box sequence). Binds to element F in an E-box sequence-specific manner. Acts as a transcriptional repressor on minimal promoter containing mu E3 enhancer sequence. Binds to mu E3 DNA sequence of the immunoglobulin heavy-chain gene enhancer. Binds DNA in a homo- or heterodimeric form. The polypeptide is Transcription factor EC (Tfec) (Mus musculus (Mouse)).